The primary structure comprises 190 residues: NADH-dependent phenylglyoxylate dehydrogenase subunit gamma (190 aa).

As to quaternary structure, dimer of heteropentamers composed of an alpha (PadG), a beta (PadI), a gamma (PadE), a delta (PadF) and an epsilon (PadH) subunit.

It catalyses the reaction phenylglyoxylate + NAD(+) + CoA = benzoyl-CoA + CO2 + NADH. Its activity is regulated as follows. Activated by magnesium ions and thiamine diphosphate. In terms of biological role, involved in the anaerobic metabolism of phenylalanine and phenylacetate. Catalyzes the oxidative decarboxylation of phenylglyoxylate to benzoyl-CoA and CO(2). It can also react slowly with 2-oxo-3-methylbutanoate and use different electron acceptors such as benzyl viologen, methyl viologen, FAD or FMN, but NAD seems to be the physiological electron acceptor. Also catalyzes an isotope exchange between CO(2) and the carboxyl group which proves partial or complete reversibility of the oxidative decarboxylation reaction. The sequence is that of NADH-dependent phenylglyoxylate dehydrogenase subunit gamma (padE) from Aromatoleum evansii (Azoarcus evansii).